The following is a 167-amino-acid chain: Lipoprotein signal peptidase (167 aa).

Transmembrane regions (helical) follow at residues 12–32, 68–88, and 99–119; these read WLWL…AVVK, WQRW…IHWL, and GIAY…RLVL. Residues Asp-124 and Asp-142 contribute to the active site. The helical transmembrane segment at 137-157 threads the bilayer; that stretch reads AFNLADSFIFIGAAMIVLDGF.

This sequence belongs to the peptidase A8 family.

It is found in the cell inner membrane. The catalysed reaction is Release of signal peptides from bacterial membrane prolipoproteins. Hydrolyzes -Xaa-Yaa-Zaa-|-(S,diacylglyceryl)Cys-, in which Xaa is hydrophobic (preferably Leu), and Yaa (Ala or Ser) and Zaa (Gly or Ala) have small, neutral side chains.. It participates in protein modification; lipoprotein biosynthesis (signal peptide cleavage). In terms of biological role, this protein specifically catalyzes the removal of signal peptides from prolipoproteins. The polypeptide is Lipoprotein signal peptidase (Aeromonas hydrophila subsp. hydrophila (strain ATCC 7966 / DSM 30187 / BCRC 13018 / CCUG 14551 / JCM 1027 / KCTC 2358 / NCIMB 9240 / NCTC 8049)).